The sequence spans 158 residues: MNQEKLAKLQAQVRIGGKGTARRKKKVVHRTATADDKKLQSSLKKLAVNNIAGIEEVNMIKDDGTVIHFNNPKVQASLSANTFAITGHAEVKQITEMLPGILSQLGADSLTSLRKLAEQFPRQVLDSKASKPEDIEEEDDDVPELVGNFDEASKNEAN.

In terms of domain architecture, NAC-A/B spans 33–98 (TADDKKLQSS…AEVKQITEML (66 aa)). A disordered region spans residues 123-158 (QVLDSKASKPEDIEEEDDDVPELVGNFDEASKNEAN). Over residues 134-143 (DIEEEDDDVP) the composition is skewed to acidic residues.

It belongs to the NAC-beta family.

The sequence is that of Transcription factor BTF3 homolog 4 (btf3l4) from Xenopus laevis (African clawed frog).